The following is a 406-amino-acid chain: (R)-benzylsuccinyl-CoA dehydrogenase (406 aa).

Belongs to the acyl-CoA dehydrogenase family. As to quaternary structure, homotetramer. The cofactor is FAD.

The catalysed reaction is (R)-2-benzylsuccinyl-CoA + oxidized [electron-transfer flavoprotein] + H(+) = (E)-2-benzylidenesuccinyl-CoA + reduced [electron-transfer flavoprotein]. It participates in xenobiotic degradation; toluene degradation. Inhibited by (S)-benzylsuccinyl-CoA. Its function is as follows. Catalyzes the oxidation of benzylsuccinyl-CoA to benzylidenesuccinyl-CoA. This Thauera aromatica protein is (R)-benzylsuccinyl-CoA dehydrogenase (bbsG).